Consider the following 394-residue polypeptide: Phosphopentomutase (394 aa).

Mn(2+) contacts are provided by Asp-13, Asp-286, His-291, Asp-327, His-328, and His-339.

Belongs to the phosphopentomutase family. The cofactor is Mn(2+).

It is found in the cytoplasm. The catalysed reaction is 2-deoxy-alpha-D-ribose 1-phosphate = 2-deoxy-D-ribose 5-phosphate. It catalyses the reaction alpha-D-ribose 1-phosphate = D-ribose 5-phosphate. Its pathway is carbohydrate degradation; 2-deoxy-D-ribose 1-phosphate degradation; D-glyceraldehyde 3-phosphate and acetaldehyde from 2-deoxy-alpha-D-ribose 1-phosphate: step 1/2. Functionally, isomerase that catalyzes the conversion of deoxy-ribose 1-phosphate (dRib-1-P) and ribose 1-phosphate (Rib-1-P) to deoxy-ribose 5-phosphate (dRib-5-P) and ribose 5-phosphate (Rib-5-P), respectively. The protein is Phosphopentomutase of Bacillus cereus (strain ATCC 10987 / NRS 248).